The chain runs to 895 residues: Glutamate receptor 2.3 (895 aa).

The first 23 residues, 1-23, serve as a signal peptide directing secretion; that stretch reads MRTEKLFFCILLVFFFCLEFNRG. The Extracellular portion of the chain corresponds to 24–582; that stretch reads QNNGKTLVDV…ILFMKPLSWK (559 aa). N-linked (GlcNAc...) asparagine glycans are attached at residues N52, N203, N266, N330, N342, N477, and N542. A helical transmembrane segment spans residues 583-603; sequence LWLTSFISFFLVGCTVWVLEY. The Cytoplasmic portion of the chain corresponds to 604-610; the sequence is KRNPDFS. A helical transmembrane segment spans residues 611–631; it reads GPPRFQASTICWFAFSTMVFA. Residues 632–635 are Cytoplasmic-facing; it reads PRER. Residues 636–656 traverse the membrane as a helical segment; that stretch reads VFSFWARALVIAWYFLVLVLT. Over 657-830 the chain is Extracellular; the sequence is QSYTASLASL…FTSRQLDIDS (174 aa). A helical membrane pass occupies residues 831–851; the sequence is FLFLFVGVLLVCVMALGNFTY. The Cytoplasmic portion of the chain corresponds to 852 to 895; it reads CFLAKDQVSYLDKVEMSPCSSSQQMPVKRKTQLNMSQVHDQDSL. The disordered stretch occupies residues 873-895; the sequence is SQQMPVKRKTQLNMSQVHDQDSL.

It belongs to the glutamate-gated ion channel (TC 1.A.10.1) family. In terms of assembly, may form heteromers. Expressed predominantly in roots.

It is found in the membrane. Functionally, glutamate-gated receptor that probably acts as a non-selective cation channel. May be involved in light-signal transduction and calcium homeostasis via the regulation of calcium influx into cells. In Arabidopsis thaliana (Mouse-ear cress), this protein is Glutamate receptor 2.3 (GLR2.3).